The chain runs to 389 residues: Succinyl-diaminopimelate desuccinylase (389 aa).

Residue His-72 coordinates Zn(2+). The active site involves Asp-74. Residue Asp-105 coordinates Zn(2+). Glu-144 functions as the Proton acceptor in the catalytic mechanism. Residues Glu-145, Glu-173, and His-362 each contribute to the Zn(2+) site.

It belongs to the peptidase M20A family. DapE subfamily. As to quaternary structure, homodimer. It depends on Zn(2+) as a cofactor. Co(2+) serves as cofactor.

The enzyme catalyses N-succinyl-(2S,6S)-2,6-diaminopimelate + H2O = (2S,6S)-2,6-diaminopimelate + succinate. It functions in the pathway amino-acid biosynthesis; L-lysine biosynthesis via DAP pathway; LL-2,6-diaminopimelate from (S)-tetrahydrodipicolinate (succinylase route): step 3/3. Its function is as follows. Catalyzes the hydrolysis of N-succinyl-L,L-diaminopimelic acid (SDAP), forming succinate and LL-2,6-diaminopimelate (DAP), an intermediate involved in the bacterial biosynthesis of lysine and meso-diaminopimelic acid, an essential component of bacterial cell walls. The protein is Succinyl-diaminopimelate desuccinylase of Rhodopseudomonas palustris (strain HaA2).